We begin with the raw amino-acid sequence, 98 residues long: NADH-ubiquinone oxidoreductase chain 4L (98 aa).

Transmembrane regions (helical) follow at residues 1-21 (MPYI…GTLM), 29-49 (SLLC…LLSL), and 61-81 (LILL…LVMI).

It belongs to the complex I subunit 4L family. In terms of assembly, core subunit of respiratory chain NADH dehydrogenase (Complex I) which is composed of 45 different subunits.

Its subcellular location is the mitochondrion inner membrane. It carries out the reaction a ubiquinone + NADH + 5 H(+)(in) = a ubiquinol + NAD(+) + 4 H(+)(out). In terms of biological role, core subunit of the mitochondrial membrane respiratory chain NADH dehydrogenase (Complex I) which catalyzes electron transfer from NADH through the respiratory chain, using ubiquinone as an electron acceptor. Part of the enzyme membrane arm which is embedded in the lipid bilayer and involved in proton translocation. This is NADH-ubiquinone oxidoreductase chain 4L (MT-ND4L) from Loxodonta africana (African elephant).